Here is a 335-residue protein sequence, read N- to C-terminus: MTGTTLAATYGPISGADLEAELAQPRIADGDAQDAAVYERDGGAHAPPFASGGAPPDGDRADVRRAAGAGDASVRLTRVSKRYGERAVLADVDLSIGRGSFVSIVGRSGCGKSTLLRLVAELETPSAGTLVKRGDGGGALDTRIMYQEARLLPWKTVLQNVMLGLGRRAKDDARAVLDEVGLLARANDWPAQLSGGQRQRVALARALVHRPQLLLLDEPLGALDALTRIEMHALIERLWREHRFTALLVTHDVQEAVALADRVLLIEAGRIAFDQRVPLDRPRARASAAFAALEDRVLQRVLTGSDAAPAAPNAAGPEGASRGRAAPASGLRWAV.

Positions 29 to 61 are disordered; it reads DGDAQDAAVYERDGGAHAPPFASGGAPPDGDRA. An ABC transporter domain is found at 74–293; sequence VRLTRVSKRY…ARASAAFAAL (220 aa). 106 to 113 provides a ligand contact to ATP; sequence GRSGCGKS. A disordered region spans residues 308 to 335; it reads APAAPNAAGPEGASRGRAAPASGLRWAV.

The protein belongs to the ABC transporter superfamily. Aliphatic sulfonates importer (TC 3.A.1.17.2) family. The complex is composed of two ATP-binding proteins (SsuB), two transmembrane proteins (SsuC) and a solute-binding protein (SsuA).

The protein resides in the cell inner membrane. It carries out the reaction ATP + H2O + aliphatic sulfonate-[sulfonate-binding protein]Side 1 = ADP + phosphate + aliphatic sulfonateSide 2 + [sulfonate-binding protein]Side 1.. Functionally, part of the ABC transporter complex SsuABC involved in aliphatic sulfonates import. Responsible for energy coupling to the transport system. The polypeptide is Aliphatic sulfonates import ATP-binding protein SsuB (Burkholderia pseudomallei (strain 1710b)).